Reading from the N-terminus, the 212-residue chain is Thymidylate kinase (212 aa).

11 to 18 (GLEGAGKT) serves as a coordination point for ATP.

The protein belongs to the thymidylate kinase family.

The enzyme catalyses dTMP + ATP = dTDP + ADP. In terms of biological role, phosphorylation of dTMP to form dTDP in both de novo and salvage pathways of dTTP synthesis. This Buchnera aphidicola subsp. Acyrthosiphon pisum (strain APS) (Acyrthosiphon pisum symbiotic bacterium) protein is Thymidylate kinase (tmk).